The chain runs to 138 residues: Small ribosomal subunit protein bS6 (138 aa).

Residues 97–121 (TEQSEMLKAEENRSERRERRDRPDN) show a composition bias toward basic and acidic residues. Residues 97–138 (TEQSEMLKAEENRSERRERRDRPDNTDGSNENDSDSDNNADE) form a disordered region. The span at 126–138 (NENDSDSDNNADE) shows a compositional bias: acidic residues.

The protein belongs to the bacterial ribosomal protein bS6 family.

Its function is as follows. Binds together with bS18 to 16S ribosomal RNA. The polypeptide is Small ribosomal subunit protein bS6 (Stutzerimonas stutzeri (strain A1501) (Pseudomonas stutzeri)).